The sequence spans 463 residues: tRNA-splicing endonuclease subunit Sen2 (463 aa).

Ser-32 and Ser-147 each carry phosphoserine. The interval 120–213 is disordered; it reads HDESTVQKIL…VASPSSLNGH (94 aa). Basic and acidic residues-rich tracts occupy residues 139-149 and 159-170; these read PYRERKGESPQ and SSLEGREGKDEL. Catalysis depends on residues Tyr-367 and His-375. Phosphoserine occurs at positions 406, 409, and 413. Lys-414 is a catalytic residue.

The protein belongs to the tRNA-intron endonuclease family. As to quaternary structure, tRNA splicing endonuclease is a heterotetramer composed of TSEN2, TSEN15, TSEN34/LENG5 and TSEN54. tRNA splicing endonuclease complex also contains proteins of the pre-mRNA 3'-end processing machinery such as CLP1, CPSF1, CPSF4 and CSTF2.

The protein localises to the nucleus. It is found in the nucleolus. It catalyses the reaction pretRNA = a 3'-half-tRNA molecule with a 5'-OH end + a 5'-half-tRNA molecule with a 2',3'-cyclic phosphate end + an intron with a 2',3'-cyclic phosphate and a 5'-hydroxyl terminus.. Its function is as follows. Constitutes one of the two catalytic subunit of the tRNA-splicing endonuclease complex, a complex responsible for identification and cleavage of the splice sites in pre-tRNA. It cleaves pre-tRNA at the 5'- and 3'-splice sites to release the intron. The products are an intron and two tRNA half-molecules bearing 2',3'-cyclic phosphate and 5'-OH termini. There are no conserved sequences at the splice sites, but the intron is invariably located at the same site in the gene, placing the splice sites an invariant distance from the constant structural features of the tRNA body. Probably carries the active site for 5'-splice site cleavage. The tRNA splicing endonuclease is also involved in mRNA processing via its association with pre-mRNA 3'-end processing factors, establishing a link between pre-tRNA splicing and pre-mRNA 3'-end formation, suggesting that the endonuclease subunits function in multiple RNA-processing events. The sequence is that of tRNA-splicing endonuclease subunit Sen2 (Tsen2) from Rattus norvegicus (Rat).